Here is a 46-residue protein sequence, read N- to C-terminus: MGMGPSLSIVNPMDVLRQRLLLEIARRRLRDAEEQIKANKDFLQQI.

I46 is subject to Isoleucine amide.

Belongs to the sauvagine/corticotropin-releasing factor/urotensin I family.

It localises to the secreted. Its function is as follows. Regulation of fluid secretion. Stimulates primary urine secretion by Malpighian tubules and causes a dose-dependent stimulation of cAMP levels in the tubules. In Locusta migratoria (Migratory locust), this protein is Diuretic hormone.